Consider the following 321-residue polypeptide: Taste receptor type 2 member 135 (321 aa).

Residues 1–28 lie on the Extracellular side of the membrane; the sequence is MGPIMSTGETSTAHTVLGCQITDKTVIT. The chain crosses the membrane as a helical span at residues 29 to 49; that stretch reads LFVILVFSCLVAVVGNGFIII. Topologically, residues 50-75 are cytoplasmic; it reads ALGMKWLLRRTLSAHNKLLISLAASR. Residues 76 to 96 traverse the membrane as a helical segment; the sequence is FCLQCVVIGKNIYVFLNPSSF. The Extracellular portion of the chain corresponds to 97 to 106; the sequence is PYNPVIQLLN. The helical transmembrane segment at 107–127 threads the bilayer; the sequence is LMWDFLTAATIWFCSLLGFFY. Residues 128–149 lie on the Cytoplasmic side of the membrane; it reads CVKIATLTHPVFVWLKYRLPGW. Residues 150 to 170 traverse the membrane as a helical segment; it reads VPWMLLSAVGMSSLTSILCFI. The Extracellular segment spans residues 171 to 207; sequence GNHMIYQNYARRGHQPWNATGNSLRHSLEKFYFISIK. An N-linked (GlcNAc...) asparagine glycan is attached at asparagine 188. The chain crosses the membrane as a helical span at residues 208–228; the sequence is IIMWTVPTVIFSIFMSLLLVS. At 229–253 the chain is on the cytoplasmic side; it reads LVRHMKKTLLALSELRDVWAQAHFK. A helical membrane pass occupies residues 254–274; that stretch reads ALLPLLSFIILFISCFLTLVL. Topologically, residues 275-286 are extracellular; that stretch reads SSASSTPYQEFR. A helical membrane pass occupies residues 287-307; sequence YWMWQVVIHLCTVIHPIVILL. Residues 308 to 321 are Cytoplasmic-facing; it reads SNPVLRVVMKRGCC.

The protein belongs to the G-protein coupled receptor T2R family.

The protein localises to the membrane. In terms of biological role, putative taste receptor which may play a role in the perception of bitterness. The polypeptide is Taste receptor type 2 member 135 (Rattus norvegicus (Rat)).